The chain runs to 465 residues: E3 ubiquitin-protein ligase TRIM38 (465 aa).

The RING-type zinc-finger motif lies at 16-63 (CSICLSLMTNPVSINCGHSYCHLCITDFFKNPSQKQLRQETFCCPQCR). The residue at position 70 (Ser70) is a Phosphoserine. The B box-type zinc finger occupies 88-129 (DQEMSCEEHGEQFHLFCEDEGQLICWRCERAPQHKGHTTALV). The Zn(2+) site is built by Cys93, His96, Cys115, and His121. A B30.2/SPRY domain is found at 274–465 (CNVSKLYFDV…SPLFLPPPGD (192 aa)).

As to quaternary structure, interacts (via B30.2/SPRY domain) with TAB2 and TAB3. Ubiquitous.

The protein resides in the cytoplasm. The catalysed reaction is S-ubiquitinyl-[E2 ubiquitin-conjugating enzyme]-L-cysteine + [acceptor protein]-L-lysine = [E2 ubiquitin-conjugating enzyme]-L-cysteine + N(6)-ubiquitinyl-[acceptor protein]-L-lysine.. The protein operates within protein modification; protein ubiquitination. It participates in protein modification; protein sumoylation. In terms of biological role, E3 ubiquitin-protein and E3 SUMO-protein ligase that acts as a regulator of innate immunity. Acts as a negative regulator of type I interferon IFN-beta production by catalyzing 'Lys-48'-linked polyubiquitination of AZI2/NAP1, leading to its degradation. Mediates 'Lys-48'-linked polyubiquitination and proteasomal degradation of the critical TLR adapter TICAM1, inhibiting TLR3-mediated type I interferon signaling. Acts as positive regulator of the cGAS-STING pathway by acting as a E3 SUMO-protein ligase: mediates sumoylation of CGAS and STING, preventing their degradation and thereby activating the innate immune response to DNA virus. Also acts as a negative regulator of NF-kappa-B signaling independently of its E3 protein ligase activity by promoting lysosome-dependent degradation of TAB2 and TAB3 adapters. The protein is E3 ubiquitin-protein ligase TRIM38 of Homo sapiens (Human).